We begin with the raw amino-acid sequence, 300 residues long: Epimerase family protein MW0731 (300 aa).

It belongs to the NAD(P)-dependent epimerase/dehydratase family. SDR39U1 subfamily.

The chain is Epimerase family protein MW0731 from Staphylococcus aureus (strain MW2).